The primary structure comprises 231 residues: Glutathione-S-transferase (231 aa).

The 84-residue stretch at 15–98 (LFAVKGTATS…YIADAYDKDG (84 aa)) folds into the GST N-terminal domain.

This sequence belongs to the GST superfamily.

It carries out the reaction RX + glutathione = an S-substituted glutathione + a halide anion + H(+). Functionally, conjugation of reduced glutathione to a wide number of exogenous and endogenous hydrophobic electrophiles. The sequence is that of Glutathione-S-transferase from Alternaria alternata (Alternaria rot fungus).